A 1057-amino-acid polypeptide reads, in one-letter code: Glycine dehydrogenase (decarboxylating), mitochondrial (1057 aa).

A mitochondrion-targeting transit peptide spans 1 to 86 (MERARRLANR…GVGYPSQSRS (86 aa)). The segment covering 18–27 (SEAKQNRKTE) has biased composition (basic and acidic residues). The disordered stretch occupies residues 18 to 47 (SEAKQNRKTESTSTTTTTPLPFSLSGSSSR). The span at 28-47 (STSTTTTTPLPFSLSGSSSR) shows a compositional bias: low complexity. At K792 the chain carries N6-(pyridoxal phosphate)lysine.

This sequence belongs to the GcvP family. In terms of assembly, homodimer. The glycine cleavage system is composed of four proteins: P, T, L and H. The cofactor is pyridoxal 5'-phosphate. As to expression, highly expressed in leaves. Detected in roots and embryos.

Its subcellular location is the mitochondrion. It catalyses the reaction N(6)-[(R)-lipoyl]-L-lysyl-[glycine-cleavage complex H protein] + glycine + H(+) = N(6)-[(R)-S(8)-aminomethyldihydrolipoyl]-L-lysyl-[glycine-cleavage complex H protein] + CO2. The glycine cleavage system catalyzes the degradation of glycine. The P protein binds the alpha-amino group of glycine through its pyridoxal phosphate cofactor; CO(2) is released and the remaining methylamine moiety is then transferred to the lipoamide cofactor of the H protein. This is Glycine dehydrogenase (decarboxylating), mitochondrial (GDCSP) from Pisum sativum (Garden pea).